The following is a 445-amino-acid chain: Phosphoglucosamine mutase (445 aa).

Catalysis depends on Ser-102, which acts as the Phosphoserine intermediate. Residues Ser-102, Asp-241, Asp-243, and Asp-245 each coordinate Mg(2+). Residue Ser-102 is modified to Phosphoserine.

The protein belongs to the phosphohexose mutase family. Mg(2+) is required as a cofactor. Post-translationally, activated by phosphorylation.

It catalyses the reaction alpha-D-glucosamine 1-phosphate = D-glucosamine 6-phosphate. In terms of biological role, catalyzes the conversion of glucosamine-6-phosphate to glucosamine-1-phosphate. This Sodalis glossinidius (strain morsitans) protein is Phosphoglucosamine mutase.